Here is a 413-residue protein sequence, read N- to C-terminus: Acetate kinase (413 aa).

Asn-7 is a Mg(2+) binding site. Residue Lys-14 participates in ATP binding. Arg-98 provides a ligand contact to substrate. Asp-157 acts as the Proton donor/acceptor in catalysis. ATP is bound by residues 216 to 220, 291 to 293, and 339 to 343; these read HIGNG, DLR, and GVGEN. Mg(2+) is bound at residue Glu-392.

It belongs to the acetokinase family. As to quaternary structure, homodimer. Requires Mg(2+) as cofactor. Mn(2+) serves as cofactor.

The protein localises to the cytoplasm. The catalysed reaction is acetate + ATP = acetyl phosphate + ADP. It functions in the pathway metabolic intermediate biosynthesis; acetyl-CoA biosynthesis; acetyl-CoA from acetate: step 1/2. In terms of biological role, catalyzes the formation of acetyl phosphate from acetate and ATP. Can also catalyze the reverse reaction. The chain is Acetate kinase from Synechocystis sp. (strain ATCC 27184 / PCC 6803 / Kazusa).